The primary structure comprises 145 residues: 3-hydroxyacyl-[acyl-carrier-protein] dehydratase FabZ (145 aa).

His49 is a catalytic residue.

The protein belongs to the thioester dehydratase family. FabZ subfamily.

It localises to the cytoplasm. It catalyses the reaction a (3R)-hydroxyacyl-[ACP] = a (2E)-enoyl-[ACP] + H2O. Functionally, involved in unsaturated fatty acids biosynthesis. Catalyzes the dehydration of short chain beta-hydroxyacyl-ACPs and long chain saturated and unsaturated beta-hydroxyacyl-ACPs. The polypeptide is 3-hydroxyacyl-[acyl-carrier-protein] dehydratase FabZ (Rickettsia typhi (strain ATCC VR-144 / Wilmington)).